Here is a 192-residue protein sequence, read N- to C-terminus: Thymidine kinase (192 aa).

Residues 9-16 (SAMNAGKS) and 87-90 (DECQ) each bind ATP. The Proton acceptor role is filled by Glu88. 4 residues coordinate Zn(2+): Cys145, Cys147, Cys182, and His185.

Belongs to the thymidine kinase family. Homotetramer.

The protein localises to the cytoplasm. It carries out the reaction thymidine + ATP = dTMP + ADP + H(+). The protein is Thymidine kinase of Vibrio vulnificus (strain CMCP6).